The chain runs to 269 residues: Centromere protein K (269 aa).

Residues 1–10 (MNQEDLDPDS) are compositionally biased toward acidic residues. The interval 1 to 20 (MNQEDLDPDSTTDVGDVTNT) is disordered. Coiled coils occupy residues 22–42 (EELIRECEEMWKDMEECQNKL) and 98–151 (QKLR…NKVE).

Belongs to the CENP-K/MCM22 family. In terms of assembly, component of the CENPA-CAD complex, composed of CENPI, CENPK, CENPL, CENPO, CENPP, CENPQ, CENPR and CENPS. The CENPA-CAD complex interacts with the CENPA-NAC complex, at least composed of CENPA, CENPC, CENPH, CENPM, CENPN, CENPT and CENPU. Interacts directly with CENPH. As to expression, detected in several fetal organs with highest levels in fetal liver. In adults, it is weakly expressed in lung and placenta.

Its subcellular location is the nucleus. The protein localises to the chromosome. It localises to the centromere. The protein resides in the kinetochore. Functionally, component of the CENPA-CAD (nucleosome distal) complex, a complex recruited to centromeres which is involved in assembly of kinetochore proteins, mitotic progression and chromosome segregation. May be involved in incorporation of newly synthesized CENPA into centromeres via its interaction with the CENPA-NAC complex. Acts in coordination with KNL1 to recruit the NDC80 complex to the outer kinetochore. The sequence is that of Centromere protein K (CENPK) from Homo sapiens (Human).